A 670-amino-acid polypeptide reads, in one-letter code: Glycine--tRNA ligase beta subunit (670 aa).

This sequence belongs to the class-II aminoacyl-tRNA synthetase family. In terms of assembly, tetramer of two alpha and two beta subunits.

The protein localises to the cytoplasm. The enzyme catalyses tRNA(Gly) + glycine + ATP = glycyl-tRNA(Gly) + AMP + diphosphate. In Thermotoga neapolitana (strain ATCC 49049 / DSM 4359 / NBRC 107923 / NS-E), this protein is Glycine--tRNA ligase beta subunit.